We begin with the raw amino-acid sequence, 477 residues long: MSTVANPNYKKGFVPFAIAALLVSLIGGFTAVLGPAFVADQGIDYNNTTWISLALAMSSAACAPILGKLGDVLGRRTTLLLGIVIFAAGNVLTAVATSLIFMLAARFIVGIGTAAISPIVMAYIVTEYPQEETGKAFGLYMLISSGAVVVGPTCGGLIMNAAGWRVMMWVCVALCVVVFLICTFSIKKTAFEKKSMAGFDKPGAALVVVFFSLFLCIPSFGQNIGWSSTAFIAAAAVALVALFILVMVEKKAKSPIMNGKFMARKEFVLPVLILFLTQGLMMANMTNVIVFVRYTQPDNVIISSFAISIMYIGMSLGSVIIGPVADKKEPKTVLTFSLVLTAIGCALMYLFKADSSVAIFAASLGILGFGLGGNATIFMKVALSGLSSEVAGSGTGTYGLFRDISAPFGVAVFVPMFANGVTANIAKYASGGMEEGAATVKAAISSIQTLTLVELGCIVVGIILVRMLPRIYQKKEA.

The next 15 helical transmembrane spans lie at 13 to 33 (FVPFAIAALLVSLIGGFTAVL), 50 to 70 (WISLALAMSSAACAPILGKLG), 83 to 103 (IVIFAAGNVLTAVATSLIFML), 107 to 127 (FIVGIGTAAISPIVMAYIVTE), 139 to 159 (LYMLISSGAVVVGPTCGGLIM), 166 to 186 (VMMWVCVALCVVVFLICTFSI), 206 to 226 (LVVVFFSLFLCIPSFGQNIGW), 228 to 248 (STAFIAAAAVALVALFILVMV), 272 to 292 (LILFLTQGLMMANMTNVIVFV), 301 to 321 (IISSFAISIMYIGMSLGSVII), 333 to 353 (VLTFSLVLTAIGCALMYLFKA), 359 to 379 (IFAASLGILGFGLGGNATIFM), 381 to 401 (VALSGLSSEVAGSGTGTYGLF), 406 to 426 (APFGVAVFVPMFANGVTANIA), and 444 to 464 (ISSIQTLTLVELGCIVVGIIL).

This sequence belongs to the major facilitator superfamily.

The protein resides in the cell membrane. The protein operates within lipid metabolism; bile acid degradation. The chain is Bile acid transporter (baiG) from Clostridium scindens (strain JCM 10418 / VPI 12708).